A 224-amino-acid polypeptide reads, in one-letter code: Cysteine S-methyltransferase NleE (224 aa).

The interaction with host proteins TAB2, TAB3 and ZRANB3 stretch occupies residues 49-52 (GITR). Residues A92, S98, R107, Q111, Y204, and E208 each contribute to the S-adenosyl-L-methionine site.

It belongs to the NleE/OspZ family. In terms of assembly, monomer.

It localises to the secreted. The protein localises to the host nucleus. It carries out the reaction L-cysteinyl-[protein] + S-adenosyl-L-methionine = S-methyl-L-cysteinyl-[protein] + S-adenosyl-L-homocysteine + H(+). Cysteine methyltransferase effector that inhibits host cell NF-kappa-B activation by preventing nuclear translocation of host protein RELA/p65. Acts by mediating cysteine methylation of host proteins TAB2 and TAB3: methylation of a conserved cysteine residue of the RanBP2-type zinc finger (NZF) of TAB2 and TAB3 disrupts zinc-binding, thereby inactivating the ubiquitin chain-binding activity of TAB2 and TAB3, leading to NF-kappa-B inactivation. Also mediates cysteine methylation of host protein ZRANB3, inactivating its ability to bind ubiquitin chains. The protein is Cysteine S-methyltransferase NleE of Escherichia coli O127:H6 (strain E2348/69 / EPEC).